Consider the following 347-residue polypeptide: Protein RecA (347 aa).

67–74 (GPESSGKT) lines the ATP pocket. The tract at residues 327 to 347 (ALGLSSPTPKENGKEKGKAKP) is disordered. Residues 337–347 (ENGKEKGKAKP) are compositionally biased toward basic and acidic residues.

Belongs to the RecA family.

Its subcellular location is the cytoplasm. Its function is as follows. Can catalyze the hydrolysis of ATP in the presence of single-stranded DNA, the ATP-dependent uptake of single-stranded DNA by duplex DNA, and the ATP-dependent hybridization of homologous single-stranded DNAs. It interacts with LexA causing its activation and leading to its autocatalytic cleavage. The sequence is that of Protein RecA from Desulforapulum autotrophicum (strain ATCC 43914 / DSM 3382 / VKM B-1955 / HRM2) (Desulfobacterium autotrophicum).